The following is a 419-amino-acid chain: UDP-N-acetylglucosamine 1-carboxyvinyltransferase 2 (419 aa).

22–23 (KN) is a binding site for phosphoenolpyruvate. Arg92 contributes to the UDP-N-acetyl-alpha-D-glucosamine binding site. Cys116 functions as the Proton donor in the catalytic mechanism. Cys116 bears the 2-(S-cysteinyl)pyruvic acid O-phosphothioketal mark. Residues 121-125 (RPIDL), Asp306, and Ile328 each bind UDP-N-acetyl-alpha-D-glucosamine.

The protein belongs to the EPSP synthase family. MurA subfamily.

The protein localises to the cytoplasm. It carries out the reaction phosphoenolpyruvate + UDP-N-acetyl-alpha-D-glucosamine = UDP-N-acetyl-3-O-(1-carboxyvinyl)-alpha-D-glucosamine + phosphate. Its pathway is cell wall biogenesis; peptidoglycan biosynthesis. Cell wall formation. Adds enolpyruvyl to UDP-N-acetylglucosamine. The sequence is that of UDP-N-acetylglucosamine 1-carboxyvinyltransferase 2 from Streptococcus pyogenes serotype M18 (strain MGAS8232).